The following is a 319-amino-acid chain: Very-long-chain 3-oxoacyl-CoA reductase-A (319 aa).

A helical transmembrane segment spans residues 17 to 37 (LFWVGALITASLALYVVYKTI). Residue 56–85 (GKWAVVTGATDGIGKSYAEELARRGFSMML) coordinates NADP(+). The next 2 helical transmembrane spans lie at 188 to 208 (GVIL…LTIY) and 282 to 302 (AVMG…NLGL). Serine 195 is a substrate binding site. Residue tyrosine 208 is the Proton acceptor of the active site.

Belongs to the short-chain dehydrogenases/reductases (SDR) family. 17-beta-HSD 3 subfamily.

It localises to the endoplasmic reticulum membrane. It carries out the reaction a very-long-chain (3R)-3-hydroxyacyl-CoA + NADP(+) = a very-long-chain 3-oxoacyl-CoA + NADPH + H(+). It catalyses the reaction 17beta-estradiol + NAD(+) = estrone + NADH + H(+). The enzyme catalyses 17beta-estradiol + NADP(+) = estrone + NADPH + H(+). The protein operates within lipid metabolism; fatty acid biosynthesis. It participates in steroid biosynthesis; estrogen biosynthesis. Catalyzes the second of the four reactions of the long-chain fatty acids elongation cycle. This endoplasmic reticulum-bound enzymatic process, allows the addition of two carbons to the chain of long- and very long-chain fatty acids/VLCFAs per cycle. This enzyme has a 3-ketoacyl-CoA reductase activity, reducing 3-ketoacyl-CoA to 3-hydroxyacyl-CoA, within each cycle of fatty acid elongation. Thereby, it may participate in the production of VLCFAs of different chain lengths that are involved in multiple biological processes as precursors of membrane lipids and lipid mediators. May also catalyze the transformation of estrone (E1) into estradiol (E2) and play a role in estrogen formation. This chain is Very-long-chain 3-oxoacyl-CoA reductase-A (hsd17b12a), found in Danio rerio (Zebrafish).